The sequence spans 102 residues: RNA-binding protein Hfq (102 aa).

One can recognise a Sm domain in the interval 9 to 68 (DPFLNALRRERVPVSIYLVNGIKLQGQIESFDQFVILLKNTVSQMVYKHAISTVVPSRPV). Positions 63-102 (VPSRPVSHHSNNTGGGSNNYHHGSSPAPSSQPQQDSADAE) are disordered. A compositionally biased stretch (low complexity) spans 70-102 (HHSNNTGGGSNNYHHGSSPAPSSQPQQDSADAE).

The protein belongs to the Hfq family. Homohexamer.

Its function is as follows. RNA chaperone that binds small regulatory RNA (sRNAs) and mRNAs to facilitate mRNA translational regulation in response to envelope stress, environmental stress and changes in metabolite concentrations. Also binds with high specificity to tRNAs. The protein is RNA-binding protein Hfq of Erwinia tasmaniensis (strain DSM 17950 / CFBP 7177 / CIP 109463 / NCPPB 4357 / Et1/99).